We begin with the raw amino-acid sequence, 189 residues long: Elongation factor P (189 aa).

Belongs to the elongation factor P family.

It is found in the cytoplasm. Its pathway is protein biosynthesis; polypeptide chain elongation. In terms of biological role, involved in peptide bond synthesis. Stimulates efficient translation and peptide-bond synthesis on native or reconstituted 70S ribosomes in vitro. Probably functions indirectly by altering the affinity of the ribosome for aminoacyl-tRNA, thus increasing their reactivity as acceptors for peptidyl transferase. This chain is Elongation factor P, found in Campylobacter jejuni subsp. doylei (strain ATCC BAA-1458 / RM4099 / 269.97).